Here is a 55-residue protein sequence, read N- to C-terminus: UPF0434 protein Erum1340/ERWE_CDS_01300 (55 aa).

Belongs to the UPF0434 family.

This Ehrlichia ruminantium (strain Welgevonden) protein is UPF0434 protein Erum1340/ERWE_CDS_01300.